Consider the following 1798-residue polypeptide: Laminin subunit beta-2 (1798 aa).

The signal sequence occupies residues 1 to 32 (MELTSRERGRGQPLPWELRLGLLLSVLAATLA). One can recognise a Laminin N-terminal domain in the interval 43 to 282 (SRGSCYPATG…ALYELVVRGN (240 aa)). N-linked (GlcNAc...) asparagine glycosylation is present at asparagine 248. 19 disulfides stabilise this stretch: cysteine 283–cysteine 292, cysteine 285–cysteine 310, cysteine 312–cysteine 321, cysteine 324–cysteine 344, cysteine 347–cysteine 356, cysteine 349–cysteine 374, cysteine 377–cysteine 386, cysteine 389–cysteine 407, cysteine 410–cysteine 423, cysteine 412–cysteine 438, cysteine 440–cysteine 449, cysteine 452–cysteine 467, cysteine 470–cysteine 484, cysteine 472–cysteine 491, cysteine 493–cysteine 502, cysteine 505–cysteine 519, cysteine 522–cysteine 534, cysteine 524–cysteine 541, and cysteine 543–cysteine 552. Laminin EGF-like domains follow at residues 283–346 (CFCY…ACRK), 347–409 (CECH…VCRS), 410–469 (CDCD…GCRR), and 470–521 (CQCN…GCRP). N-linked (GlcNAc...) asparagine glycosylation occurs at asparagine 368. Residues 522 to 552 (CDCDVGGALDPQCDEGTGQCHCRQHMVGRRC) enclose the Laminin EGF-like 5; truncated domain. The 217-residue stretch at 561–777 (RPFLDHLIWE…LLISLSTLIY (217 aa)) folds into the Laminin IV type B domain. 32 disulfides stabilise this stretch: cysteine 783–cysteine 795, cysteine 785–cysteine 802, cysteine 804–cysteine 813, cysteine 816–cysteine 828, cysteine 831–cysteine 843, cysteine 833–cysteine 850, cysteine 852–cysteine 861, cysteine 864–cysteine 874, cysteine 877–cysteine 886, cysteine 879–cysteine 893, cysteine 896–cysteine 905, cysteine 908–cysteine 924, cysteine 927–cysteine 943, cysteine 929–cysteine 954, cysteine 956–cysteine 965, cysteine 968–cysteine 983, cysteine 986–cysteine 1000, cysteine 988–cysteine 1007, cysteine 1010–cysteine 1019, cysteine 1022–cysteine 1035, cysteine 1038–cysteine 1058, cysteine 1040–cysteine 1065, cysteine 1067–cysteine 1076, cysteine 1079–cysteine 1092, cysteine 1095–cysteine 1107, cysteine 1097–cysteine 1114, cysteine 1116–cysteine 1125, cysteine 1128–cysteine 1140, cysteine 1143–cysteine 1155, cysteine 1145–cysteine 1162, cysteine 1164–cysteine 1173, and cysteine 1176–cysteine 1187. 8 Laminin EGF-like domains span residues 783 to 830 (CQCN…GCQA), 831 to 876 (CQCS…SCRP), 877 to 926 (CVCN…QCRP), 927 to 985 (CPCP…RCQL), 986 to 1037 (CECS…SCHR), 1038 to 1094 (CTCN…GCQP), 1095 to 1142 (CACH…QCHA), and 1143 to 1189 (CDCD…ACHP). Asparagine 1085 is a glycosylation site (N-linked (GlcNAc...) asparagine). Residues 1190–1409 (CHACFGDWDR…LSLTDINELV (220 aa)) form a domain II region. N-linked (GlcNAc...) asparagine glycans are attached at residues asparagine 1249, asparagine 1308, and asparagine 1348. The stretch at 1253 to 1319 (ASTAQLVEAT…TLRQLDQHLD (67 aa)) forms a coiled coil. Residues 1338-1364 (SQSAEAERRANTSALAVPSPVSNSASA) form a disordered region. Over residues 1350-1363 (SALAVPSPVSNSAS) the composition is skewed to low complexity. The segment at 1410 to 1442 (CGAPGDAPCATSPCGGAGCRDEDGQPRCGGLSC) is domain alpha. Residues 1443–1798 (NGAAATADLA…LQVQIYNTCQ (356 aa)) form a domain I region. Residues 1472–1526 (SILSRVAETRRQASEAQQRAQAALDKANASRGQVEQANQELQELIQSVKDFLNQE) are a coiled coil. The N-linked (GlcNAc...) asparagine glycan is linked to asparagine 1499. Serine 1532 is modified (phosphoserine; by FAM20C). Positions 1577–1790 (VGDVRRAEQL…RSVLQAINLQ (214 aa)) form a coiled coil.

Laminin is a complex glycoprotein, consisting of three different polypeptide chains (alpha, beta, gamma), which are bound to each other by disulfide bonds into a cross-shaped molecule comprising one long and three short arms with globules at each end. Beta-2 is a subunit of laminin-3 (laminin-121 or S-laminin), laminin-4 (laminin-221 or S-merosin), laminin-7 (laminin-321 or KS-laminin), laminin-9 (laminin-421), laminin-11 (laminin-521), laminin-14 (laminin-423) and laminin-15 (laminin-523).

The protein localises to the secreted. Its subcellular location is the extracellular space. It localises to the extracellular matrix. It is found in the basement membrane. Its function is as follows. Binding to cells via a high affinity receptor, laminin is thought to mediate the attachment, migration and organization of cells into tissues during embryonic development by interacting with other extracellular matrix components. This chain is Laminin subunit beta-2 (LAMB2), found in Homo sapiens (Human).